The chain runs to 122 residues: T-cell receptor beta chain V region C5 (122 aa).

Residues 1–7 form the signal peptide; that stretch reads ILLCAKH. Residues 8–103 form a v segment region; the sequence is MEAAVTQSPR…TAVYFCASSG (96 aa). Residues C31 and C99 are joined by a disulfide bond. The tract at residues 104 to 108 is d segment; the sequence is TGGAL. Positions 109–122 are j segment; the sequence is DTQYFGPGTRLLVL.

The chain is T-cell receptor beta chain V region C5 from Mus musculus (Mouse).